A 317-amino-acid polypeptide reads, in one-letter code: Ferrochelatase (317 aa).

Fe cation-binding residues include His184 and Glu259.

This sequence belongs to the ferrochelatase family.

The protein resides in the cytoplasm. The catalysed reaction is heme b + 2 H(+) = protoporphyrin IX + Fe(2+). It functions in the pathway porphyrin-containing compound metabolism; protoheme biosynthesis; protoheme from protoporphyrin-IX: step 1/1. Functionally, catalyzes the ferrous insertion into protoporphyrin IX. The polypeptide is Ferrochelatase (Chlamydia muridarum (strain MoPn / Nigg)).